A 130-amino-acid polypeptide reads, in one-letter code: Small ribosomal subunit protein uS9 (130 aa).

It belongs to the universal ribosomal protein uS9 family.

This chain is Small ribosomal subunit protein uS9, found in Photorhabdus laumondii subsp. laumondii (strain DSM 15139 / CIP 105565 / TT01) (Photorhabdus luminescens subsp. laumondii).